A 100-amino-acid chain; its full sequence is Protein RADIALIS-like 1 (100 aa).

The 56-residue stretch at 9–64 (QSSGSWTAKQNKAFEQALATYDQDTPNRWQNVAKVVGGKTTEEVKRHYELLVQDIN) folds into the SANT domain. The tract at residues 73–100 (FPNYRTSGGCTNGRLSQEEKRMRNMRLQ) is disordered. Over residues 76 to 87 (YRTSGGCTNGRL) the composition is skewed to polar residues.

It localises to the nucleus. Probable transcription factor. This is Protein RADIALIS-like 1 (RL1) from Arabidopsis thaliana (Mouse-ear cress).